The primary structure comprises 198 residues: Nucleoid occlusion factor SlmA (198 aa).

Residues 9 to 70 enclose the HTH tetR-type domain; sequence RNRREEILQA…SLIEFIEDTL (62 aa). The segment at residues 33–52 is a DNA-binding region (H-T-H motif); sequence TTAKLAANVGVSEAALYRHF. Residues 117–144 are a coiled coil; sequence EQDRLQGRINQLFERIEAQLRQVLKERR.

This sequence belongs to the nucleoid occlusion factor SlmA family. In terms of assembly, homodimer. Interacts with FtsZ.

It localises to the cytoplasm. Its subcellular location is the nucleoid. Functionally, required for nucleoid occlusion (NO) phenomenon, which prevents Z-ring formation and cell division over the nucleoid. Acts as a DNA-associated cell division inhibitor that binds simultaneously chromosomal DNA and FtsZ, and disrupts the assembly of FtsZ polymers. SlmA-DNA-binding sequences (SBS) are dispersed on non-Ter regions of the chromosome, preventing FtsZ polymerization at these regions. This Edwardsiella ictaluri (strain 93-146) protein is Nucleoid occlusion factor SlmA.